Consider the following 135-residue polypeptide: ATP synthase epsilon chain (135 aa).

It belongs to the ATPase epsilon chain family. F-type ATPases have 2 components, CF(1) - the catalytic core - and CF(0) - the membrane proton channel. CF(1) has five subunits: alpha(3), beta(3), gamma(1), delta(1), epsilon(1). CF(0) has three main subunits: a, b and c.

It localises to the cell inner membrane. Functionally, produces ATP from ADP in the presence of a proton gradient across the membrane. This chain is ATP synthase epsilon chain, found in Rhizobium leguminosarum bv. trifolii (strain WSM2304).